The following is a 313-amino-acid chain: HPr kinase/phosphorylase (313 aa).

Catalysis depends on residues H140 and K161. ATP is bound at residue 155 to 162 (GDSGVGKS). Position 162 (S162) interacts with Mg(2+). The Proton acceptor; for phosphorylation activity. Proton donor; for dephosphorylation activity role is filled by D179. The interval 203–212 (LEIRGIGIID) is important for the catalytic mechanism of both phosphorylation and dephosphorylation. E204 serves as a coordination point for Mg(2+). Residue R245 is part of the active site. The interval 266–271 (PVKVGR) is important for the catalytic mechanism of dephosphorylation.

Belongs to the HPrK/P family. As to quaternary structure, homohexamer. Mg(2+) serves as cofactor.

The enzyme catalyses [HPr protein]-L-serine + ATP = [HPr protein]-O-phospho-L-serine + ADP + H(+). It catalyses the reaction [HPr protein]-O-phospho-L-serine + phosphate + H(+) = [HPr protein]-L-serine + diphosphate. Functionally, catalyzes the ATP- as well as the pyrophosphate-dependent phosphorylation of a specific serine residue in HPr, a phosphocarrier protein of the phosphoenolpyruvate-dependent sugar phosphotransferase system (PTS). HprK/P also catalyzes the pyrophosphate-producing, inorganic phosphate-dependent dephosphorylation (phosphorolysis) of seryl-phosphorylated HPr (P-Ser-HPr). The two antagonistic activities of HprK/P are regulated by several intracellular metabolites, which change their concentration in response to the absence or presence of rapidly metabolisable carbon sources (glucose, fructose, etc.) in the growth medium. Therefore, by controlling the phosphorylation state of HPr, HPrK/P is a sensor enzyme that plays a major role in the regulation of carbon metabolism and sugar transport: it mediates carbon catabolite repression (CCR), and regulates PTS-catalyzed carbohydrate uptake and inducer exclusion. The chain is HPr kinase/phosphorylase from Latilactobacillus sakei subsp. sakei (strain 23K) (Lactobacillus sakei subsp. sakei).